The following is a 134-amino-acid chain: Ribonuclease P protein component (134 aa).

Belongs to the RnpA family. Consists of a catalytic RNA component (M1 or rnpB) and a protein subunit.

The enzyme catalyses Endonucleolytic cleavage of RNA, removing 5'-extranucleotides from tRNA precursor.. RNaseP catalyzes the removal of the 5'-leader sequence from pre-tRNA to produce the mature 5'-terminus. It can also cleave other RNA substrates such as 4.5S RNA. The protein component plays an auxiliary but essential role in vivo by binding to the 5'-leader sequence and broadening the substrate specificity of the ribozyme. This Ectopseudomonas mendocina (strain ymp) (Pseudomonas mendocina) protein is Ribonuclease P protein component.